A 158-amino-acid polypeptide reads, in one-letter code: NAD(P)H-quinone oxidoreductase subunit J, chloroplastic (158 aa).

Belongs to the complex I 30 kDa subunit family. In terms of assembly, NDH is composed of at least 16 different subunits, 5 of which are encoded in the nucleus.

It is found in the plastid. The protein resides in the chloroplast thylakoid membrane. It catalyses the reaction a plastoquinone + NADH + (n+1) H(+)(in) = a plastoquinol + NAD(+) + n H(+)(out). The enzyme catalyses a plastoquinone + NADPH + (n+1) H(+)(in) = a plastoquinol + NADP(+) + n H(+)(out). NDH shuttles electrons from NAD(P)H:plastoquinone, via FMN and iron-sulfur (Fe-S) centers, to quinones in the photosynthetic chain and possibly in a chloroplast respiratory chain. The immediate electron acceptor for the enzyme in this species is believed to be plastoquinone. Couples the redox reaction to proton translocation, and thus conserves the redox energy in a proton gradient. The chain is NAD(P)H-quinone oxidoreductase subunit J, chloroplastic from Cicer arietinum (Chickpea).